Here is a 307-residue protein sequence, read N- to C-terminus: Ribonuclease Z (307 aa).

7 residues coordinate Zn(2+): histidine 63, histidine 65, aspartate 67, histidine 68, histidine 140, aspartate 211, and histidine 269. Aspartate 67 acts as the Proton acceptor in catalysis.

This sequence belongs to the RNase Z family. Homodimer. Zn(2+) is required as a cofactor.

It carries out the reaction Endonucleolytic cleavage of RNA, removing extra 3' nucleotides from tRNA precursor, generating 3' termini of tRNAs. A 3'-hydroxy group is left at the tRNA terminus and a 5'-phosphoryl group is left at the trailer molecule.. Zinc phosphodiesterase, which displays some tRNA 3'-processing endonuclease activity. Probably involved in tRNA maturation, by removing a 3'-trailer from precursor tRNA. The protein is Ribonuclease Z of Geobacillus kaustophilus (strain HTA426).